We begin with the raw amino-acid sequence, 326 residues long: uncharacterized protein (326 aa).

The protein belongs to the transferase hexapeptide repeat family.

This is an uncharacterized protein from Escherichia coli (strain K12).